A 105-amino-acid polypeptide reads, in one-letter code: Sec-independent protein translocase protein TatA (105 aa).

The chain crosses the membrane as a helical span at residues 1 to 21; that stretch reads MSLGPWEIGIIVLLIIVLFGA. Basic and acidic residues predominate over residues 41–50; that stretch reads EVKEMNKDGD. Positions 41-105 are disordered; the sequence is EVKEMNKDGD…QNYEDPNRTS (65 aa). A compositionally biased stretch (low complexity) spans 52–92; it reads PEQQQQPQQQIAPNQIEAPQPNFEQHYQGQQVQQPQNPQTP. Positions 96-105 are enriched in basic and acidic residues; sequence QNYEDPNRTS.

It belongs to the TatA/E family. The Tat system comprises two distinct complexes: a TatABC complex, containing multiple copies of TatA, TatB and TatC subunits, and a separate TatA complex, containing only TatA subunits. Substrates initially bind to the TatABC complex, which probably triggers association of the separate TatA complex to form the active translocon.

The protein resides in the cell membrane. Functionally, part of the twin-arginine translocation (Tat) system that transports large folded proteins containing a characteristic twin-arginine motif in their signal peptide across membranes. TatA could form the protein-conducting channel of the Tat system. This chain is Sec-independent protein translocase protein TatA, found in Corynebacterium glutamicum (strain ATCC 13032 / DSM 20300 / JCM 1318 / BCRC 11384 / CCUG 27702 / LMG 3730 / NBRC 12168 / NCIMB 10025 / NRRL B-2784 / 534).